Reading from the N-terminus, the 202-residue chain is Peptide deformylase (202 aa).

Fe cation is bound by residues Cys121 and His163. Glu164 is a catalytic residue. His167 serves as a coordination point for Fe cation.

Belongs to the polypeptide deformylase family. The cofactor is Fe(2+).

The catalysed reaction is N-terminal N-formyl-L-methionyl-[peptide] + H2O = N-terminal L-methionyl-[peptide] + formate. Its function is as follows. Removes the formyl group from the N-terminal Met of newly synthesized proteins. Requires at least a dipeptide for an efficient rate of reaction. N-terminal L-methionine is a prerequisite for activity but the enzyme has broad specificity at other positions. This Synechococcus sp. (strain CC9311) protein is Peptide deformylase.